The following is a 59-amino-acid chain: Venom protein 27.7 (59 aa).

The first 29 residues, 1–29 (MTFITLTIGLSLRTIFLIFIFLPPPHLLA), serve as a signal peptide directing secretion.

It belongs to the non-disulfide-bridged peptide (NDBP) superfamily. As to expression, expressed by the venom gland.

Its subcellular location is the secreted. The chain is Venom protein 27.7 from Lychas mucronatus (Chinese swimming scorpion).